The primary structure comprises 261 residues: Short-chain-enoyl-CoA hydratase (261 aa).

The active-site Nucleophile is the Glu114. Glu134 (proton acceptor) is an active-site residue.

Belongs to the enoyl-CoA hydratase/isomerase family. Homotetramer.

The catalysed reaction is a short-chain (3S)-3-hydroxyacyl-CoA = a short-chain (2E)-enoyl-CoA + H2O. The protein operates within lipid metabolism; butanoate metabolism. In terms of biological role, catalyzes the reversible hydration of crotonyl-CoA. Can also use hexenoyl-CoA but not higher analogs. The chain is Short-chain-enoyl-CoA hydratase (crt) from Clostridium acetobutylicum (strain ATCC 824 / DSM 792 / JCM 1419 / IAM 19013 / LMG 5710 / NBRC 13948 / NRRL B-527 / VKM B-1787 / 2291 / W).